The sequence spans 456 residues: Phosphomethylpyrimidine synthase (456 aa).

Substrate is bound by residues N80, M109, Y139, H175, 195-197 (SRG), 236-239 (DSLR), and E275. H279 is a Zn(2+) binding site. Y302 is a substrate binding site. H343 serves as a coordination point for Zn(2+). Positions 423, 426, and 431 each coordinate [4Fe-4S] cluster.

It belongs to the ThiC family. Requires [4Fe-4S] cluster as cofactor.

The enzyme catalyses 5-amino-1-(5-phospho-beta-D-ribosyl)imidazole + S-adenosyl-L-methionine = 4-amino-2-methyl-5-(phosphooxymethyl)pyrimidine + CO + 5'-deoxyadenosine + formate + L-methionine + 3 H(+). It functions in the pathway cofactor biosynthesis; thiamine diphosphate biosynthesis. Catalyzes the synthesis of the hydroxymethylpyrimidine phosphate (HMP-P) moiety of thiamine from aminoimidazole ribotide (AIR) in a radical S-adenosyl-L-methionine (SAM)-dependent reaction. In Prochlorococcus marinus subsp. pastoris (strain CCMP1986 / NIES-2087 / MED4), this protein is Phosphomethylpyrimidine synthase.